The chain runs to 388 residues: 1D-myo-inositol 2-acetamido-2-deoxy-alpha-D-glucopyranoside deacetylase (388 aa).

Zn(2+) contacts are provided by His6, Asp9, and His144. Residues 369 to 388 (LDQADEGAAHDTSEQSGQRR) are disordered.

Belongs to the MshB deacetylase family. Zn(2+) serves as cofactor.

The enzyme catalyses 1D-myo-inositol 2-acetamido-2-deoxy-alpha-D-glucopyranoside + H2O = 1D-myo-inositol 2-amino-2-deoxy-alpha-D-glucopyranoside + acetate. Functionally, catalyzes the deacetylation of 1D-myo-inositol 2-acetamido-2-deoxy-alpha-D-glucopyranoside (GlcNAc-Ins) in the mycothiol biosynthesis pathway. The polypeptide is 1D-myo-inositol 2-acetamido-2-deoxy-alpha-D-glucopyranoside deacetylase (Corynebacterium kroppenstedtii (strain DSM 44385 / JCM 11950 / CIP 105744 / CCUG 35717)).